We begin with the raw amino-acid sequence, 220 residues long: 7-cyano-7-deazaguanine synthase (220 aa).

An ATP-binding site is contributed by 10–20 (FSGGQDSTTCL). Positions 186, 195, 198, and 201 each coordinate Zn(2+).

This sequence belongs to the QueC family. In terms of assembly, homodimer. Requires Zn(2+) as cofactor.

The enzyme catalyses 7-carboxy-7-deazaguanine + NH4(+) + ATP = 7-cyano-7-deazaguanine + ADP + phosphate + H2O + H(+). Its pathway is purine metabolism; 7-cyano-7-deazaguanine biosynthesis. Catalyzes the ATP-dependent conversion of 7-carboxy-7-deazaguanine (CDG) to 7-cyano-7-deazaguanine (preQ(0)). The sequence is that of 7-cyano-7-deazaguanine synthase from Bacillus cereus (strain AH187).